Reading from the N-terminus, the 230-residue chain is Fibrillarin-like rRNA/tRNA 2'-O-methyltransferase (230 aa).

Residues 87–88 (TT), 105–106 (EF), 130–131 (DA), and 150–153 (DVAQ) contribute to the S-adenosyl-L-methionine site.

It belongs to the methyltransferase superfamily. Fibrillarin family. In terms of assembly, interacts with nop5. Component of box C/D small ribonucleoprotein (sRNP) particles that contain rpl7ae, FlpA and nop5, plus a guide RNA.

Functionally, involved in pre-rRNA and tRNA processing. Utilizes the methyl donor S-adenosyl-L-methionine to catalyze the site-specific 2'-hydroxyl methylation of ribose moieties in rRNA and tRNA. Site specificity is provided by a guide RNA that base pairs with the substrate. Methylation occurs at a characteristic distance from the sequence involved in base pairing with the guide RNA. This chain is Fibrillarin-like rRNA/tRNA 2'-O-methyltransferase, found in Methanococcus maripaludis (strain C6 / ATCC BAA-1332).